The chain runs to 326 residues: Aspartate--ammonia ligase (326 aa).

Belongs to the class-II aminoacyl-tRNA synthetase family. AsnA subfamily.

The protein localises to the cytoplasm. The enzyme catalyses L-aspartate + NH4(+) + ATP = L-asparagine + AMP + diphosphate + H(+). It participates in amino-acid biosynthesis; L-asparagine biosynthesis; L-asparagine from L-aspartate (ammonia route): step 1/1. This is Aspartate--ammonia ligase from Malacoplasma penetrans (strain HF-2) (Mycoplasma penetrans).